A 1742-amino-acid polypeptide reads, in one-letter code: MWPAGAGTKLPCPRDSALRRAAFSGNLTALPSHLVPAGRSVRVFISANPEDTGAERQALRENVYPKLREFCRENYGLEFQVIDLYWGVEEDEWDSPELQKTRMKLLENCLKTSAGPCFVGLLGEKYGNIRIPGEVEASEFEMILDAAIEAKLETKLLEEWYCRDENSVPAAYYLRPKSEMLRSNRNAMQPSTNAENEKTWQEISDEIKKIFKAAVKLLHEKGKMKHSQAKRYLFSAIEDEFDFALGKQTPAFLKKCVCYIRKIANIERFVKIPEMGKYMDITGTEPRIIRDPEAQEKLIKLRDEFIPTIVASSNLRVYTSVTHCDMKLGYSQEIENHYIEGLGKQFYEDMIDIIQATIQQNFDTETDTLYDEILQHSSLCKTYASFYEYKCESLNIVHNYILPSKAGHINPLIIYGGPCTGKTLLLAEVAKKAYGWLHEDTGPESDPVVIVRFLGTTDMSSDLRTLLLSVCEQLAVNYRCLVQSYPKKIHDLCDLFINLLNESSLQRPLVIIFDALEQLSENDDARKLWWLPAHLPRFVRIVLSTLPNKHGILQKLRCLIHEEDNYIELIPRDRKMCSQVLKHQLLRVKRKVTSGQQIYVNNALSKCTLPMFVNLTFREVRHWRSHKDVDESSLSVTVHESIEQLFWSLEKKCGQKLVSRALGYITMAKMGLSEMELEDVLALDNSVMSELKENTRPSNPLRVPYLYIARLKEGLSGYLIERHVKNVTLLVWANRHLQLIAQKLYLQDDNDLREMHTILADYFLGVWSGGRRKAFCLEDPYLNGCLDLENRSLLEEEKHFMEQASFDRQAPDQPWVFQCNPLEPDIFFVNHRKMSELLYHLTRCGKTDDLLYGIIMNFSWLYTMIKIGQFDKVLSDIELAYNYSQEKELKFLANTLRSIKNKVTAFPGSLSAELQQRLLPVVSSLPKLRHLLLECDKDGPKYCSIVPLHSSMDVTYSPERLPLSSSHLHVTEILPTCNPSTVLTALENGSISTWDVETRQLLRQITTAQSVILGMKLTSDEKYLVVATTNNTLLIYDNVNSCLLSEVEIKGTKHGSSATYINGFTLSANHALAWLEASKDVTVIDLLYGWPLYQFHCWYEVTCVQCSLDGLYAFCGQYLNTTTIFHLGSGEKLCTVTSEFSGGFVKFLLILDTAQEMVMVDSEGSLSVWNTEDISSPQLTDDFDCRREDSEVVSIELSEDQSAVLICKALSIELLDTGLWKVAEKFRAKHNERFISAVLSKNGDCIIATMENTSAVFFWRRDTGQCMASLQEISGSIVKLVKSSHHNMLLSLSTSGVLSIWDIDIITAMSNIDKTGKPIQSLLLPARGEIIYSLDGSDCVHKWNFSSGFIEAVFKHEGIVEHCVLTSTGDIMVTSDDKSSQYVWHTSSGENLFRINGQRISQLLITHNDQFVVSLCEENASRVWRLATGHRVCNILTTLQNAFITSANTFVVGMTKSKVLAVSLWTGSITKKFCCEDGTTIVNFKLIPDCPDIIVFITSAETVNIWSLTDEVICRRVQLPNNFLKNLEDFEISPNGKLGIIARGDENINVLDLYSGKLRVVHASGIIWRQRLSRDGRYLVYICFRNGEEEDENGAIFSLIVMRLADGKNIGACSLYKTPTFLALSQRHLNIIVGFDDGSIGIYTVVDRVDAALKIKIATSNSRQIFNNATHTSRPKCNSYCFKISVDCLWRESTEVFARDSPITVSDSTESNEATPSKKHNSCYERVCSALEARGHSYAPDN.

LRR repeat units follow at residues 386-410 (FYEY…GHIN), 677-698 (LEDV…TRPS), 724-747 (VKNV…LYLQ), 883-906 (YSQE…VTAF), and 925-953 (LPKL…SSMD). Positions 410–737 (NPLIIYGGPC…TLLVWANRHL (328 aa)) constitute an NACHT domain. WD repeat units lie at residues 963-1004 (LSSS…LLRQ), 1007-1046 (TAQS…LLSE), 1140-1179 (FSGG…SPQL), 1229-1271 (KHNE…ASLQ), 1272-1311 (EISG…AMSN), 1314-1353 (KTGK…IEAV), 1355-1394 (KHEG…NLFR), 1396-1434 (NGQR…RVCN), 1476-1516 (EDGT…ICRR), 1522-1564 (NFLK…VHAS), and 1614-1653 (SLYK…DAAL).

The polypeptide is NACHT and WD repeat domain-containing protein 2 (NWD2) (Homo sapiens (Human)).